A 79-amino-acid polypeptide reads, in one-letter code: Small ribosomal subunit protein bS18 (79 aa).

It belongs to the bacterial ribosomal protein bS18 family. In terms of assembly, part of the 30S ribosomal subunit. Forms a tight heterodimer with protein bS6.

Binds as a heterodimer with protein bS6 to the central domain of the 16S rRNA, where it helps stabilize the platform of the 30S subunit. This Bacillus subtilis (strain 168) protein is Small ribosomal subunit protein bS18 (rpsR).